Consider the following 200-residue polypeptide: Rubrerythrin (200 aa).

The Ferritin-like diiron domain occupies 12–155 (SIKGSKTEKH…ALLAHVEDGS (144 aa)). Positions 29, 62, 103, 106, 137, 140, 167, 170, 183, and 186 each coordinate Fe(3+). Residues 162-200 (EIAWQCRNCGYVITSKKAPKLCPACAHPQAYFEPMKTNY) enclose the Rubredoxin-like domain.

As to quaternary structure, homodimer. Possesses two rubredoxin-like centers and two non-sulfur oxo-bridged di-iron centers per dimer. Requires Fe(3+) as cofactor.

Its subcellular location is the cytoplasm. May provide oxidative stress protection via catalytic reduction of intracellular hydrogen peroxide. This chain is Rubrerythrin (rbr), found in Porphyromonas gingivalis (strain ATCC BAA-308 / W83).